Here is a 453-residue protein sequence, read N- to C-terminus: F-box protein SKIP14 (453 aa).

The F-box; degenerate domain occupies R34 to S104.

As to quaternary structure, part of a SCF (ASK-cullin-F-box) protein ligase complex. Interacts with CUL1, SKP1A/ASK1 and SPK1B/ASK2.

It functions in the pathway protein modification; protein ubiquitination. In terms of biological role, component of SCF(ASK-cullin-F-box) E3 ubiquitin ligase complexes, which may mediate the ubiquitination and subsequent proteasomal degradation of target proteins. This Arabidopsis thaliana (Mouse-ear cress) protein is F-box protein SKIP14 (SKIP14).